A 216-amino-acid chain; its full sequence is Endo-1,4-beta-xylanase 2 (216 aa).

The N-terminal stretch at 1–27 (MVSFSSLFVAACAAVTAFALPNELEKR) is a signal peptide. Residues 28–216 (AITSNEQGTN…SSGSASITVS (189 aa)) form the GH11 domain. N-linked (GlcNAc...) asparagine glycosylation is present at asparagine 87. Glutamate 112 (nucleophile) is an active-site residue. Catalysis depends on glutamate 203, which acts as the Proton donor.

The protein belongs to the glycosyl hydrolase 11 (cellulase G) family.

It is found in the secreted. The enzyme catalyses Endohydrolysis of (1-&gt;4)-beta-D-xylosidic linkages in xylans.. Its pathway is glycan degradation; xylan degradation. Its function is as follows. Endo-1,4-beta-xylanase involved in the hydrolysis of xylan, a major structural heterogeneous polysaccharide found in plant biomass representing the second most abundant polysaccharide in the biosphere, after cellulose. The sequence is that of Endo-1,4-beta-xylanase 2 (xyn2) from Rhizopus oryzae (Mucormycosis agent).